Here is a 360-residue protein sequence, read N- to C-terminus: 3-isopropylmalate dehydrogenase (360 aa).

76–89 serves as a coordination point for NAD(+); sequence GPKWDTIERDIRPE. The substrate site is built by R96, R106, R134, and D224. 3 residues coordinate Mg(2+): D224, D248, and D252. Position 282–294 (282–294) interacts with NAD(+); it reads GSAPDIAGQGIAN.

The protein belongs to the isocitrate and isopropylmalate dehydrogenases family. LeuB type 1 subfamily. Homodimer. It depends on Mg(2+) as a cofactor. The cofactor is Mn(2+).

It is found in the cytoplasm. It catalyses the reaction (2R,3S)-3-isopropylmalate + NAD(+) = 4-methyl-2-oxopentanoate + CO2 + NADH. Its pathway is amino-acid biosynthesis; L-leucine biosynthesis; L-leucine from 3-methyl-2-oxobutanoate: step 3/4. Functionally, catalyzes the oxidation of 3-carboxy-2-hydroxy-4-methylpentanoate (3-isopropylmalate) to 3-carboxy-4-methyl-2-oxopentanoate. The product decarboxylates to 4-methyl-2 oxopentanoate. The protein is 3-isopropylmalate dehydrogenase of Pseudomonas syringae pv. tomato (strain ATCC BAA-871 / DC3000).